The primary structure comprises 160 residues: Small ribosomal subunit protein uS17m (160 aa).

The protein belongs to the universal ribosomal protein uS17 family. Component of the mitochondrial ribosome small subunit (28S) which comprises a 12S rRNA and about 30 distinct proteins.

It is found in the mitochondrion. This is Small ribosomal subunit protein uS17m (mrps-17) from Caenorhabditis elegans.